Consider the following 457-residue polypeptide: Streptogrisin-C (457 aa).

A signal peptide (tat-type signal) is located at residues M1–A34. The propeptide occupies D35 to L202. A catalytic region spans residues A203–S393. C219 and C239 are oxidised to a cystine. Residues H238 and D266 each act as charge relay system in the active site. Cystine bridges form between C305–C315 and C341–C368. S347 acts as the Charge relay system in catalysis. Residues S393 to G412 form a disordered region. A linker region spans residues G394–T413. Pro residues predominate over residues T399–D408. Residues A415–V457 enclose the Chitin-binding type-3 domain.

It belongs to the peptidase S1 family. As to quaternary structure, monomer. Post-translationally, predicted to be exported by the Tat system. The position of the signal peptide cleavage has not been experimentally proven.

Hydrolysis of proteins with specificity similar to chymotrypsin. May be specialized for the degradation of chitin-linked proteins. Has a primary specificity for large aliphatic or aromatic amino acids. The polypeptide is Streptogrisin-C (sprC) (Streptomyces griseus).